The following is a 1439-amino-acid chain: Fanconi anemia group A protein homolog (1439 aa).

The segment at 1 to 20 is disordered; sequence MPGSPARGAAMGGGPRGLRK. The Nuclear localization signal motif lies at 19–35; sequence RKTWTELLAGRVKKQKY.

In terms of assembly, belongs to the multisubunit FA complex composed of FANCA, FANCB, FANCC, FANCE, FANCF, FANCG, FANCL/PHF9 and FANCM. In complex with FANCF, FANCG and FANCL, but not with FANCC, nor FANCE, interacts with HES1; this interaction may be essential for the stability and nuclear localization of FA core complex proteins. The complex with FANCC and FANCG may also include EIF2AK2 and HSP70. Interacts with FAAP20; interaction is direct. Post-translationally, phosphorylated primarily on serine residues. Phosphorylation is required for the formation of the nuclear complex. As to expression, mainly expressed in testis and lymphoid tissues like thymus, lymph nodes, and spleen, and at lower levels in kidney and ovary.

The protein resides in the nucleus. It is found in the cytoplasm. In terms of biological role, DNA repair protein that may operate in a postreplication repair or a cell cycle checkpoint function. May be involved in interstrand DNA cross-link repair and in the maintenance of normal chromosome stability. This is Fanconi anemia group A protein homolog (Fanca) from Mus musculus (Mouse).